The primary structure comprises 284 residues: Tropomyosin (284 aa).

A coiled-coil region spans residues 1 to 284; it reads MEAIKNKMQA…DQTFAELTGY (284 aa).

The protein belongs to the tropomyosin family. Homodimer.

Functionally, tropomyosin, in association with the troponin complex, plays a central role in the calcium dependent regulation of muscle contraction. This chain is Tropomyosin, found in Dermatophagoides pteronyssinus (European house dust mite).